Here is a 265-residue protein sequence, read N- to C-terminus: Palmitoyltransferase ZDHHC21 (265 aa).

The Cytoplasmic segment spans residues 1–16; the sequence is MGLRIHFVVDPHGWCC. The helical transmembrane segment at 17–37 threads the bilayer; the sequence is MGLIVFVWLYNIVLIPKIVLF. Over 38 to 44 the chain is Extracellular; it reads PHYEEGH. Residues 45–65 traverse the membrane as a helical segment; it reads IPGILIIIFYGISIFCLVALV. The Cytoplasmic segment spans residues 66–133; it reads RASITDPGRL…NNCVGEDNHW (68 aa). The DHHC domain maps to 90–140; sequence ELCNKCNLMRPKRSHHCSRCGHCVRRMDHHCPWINNCVGEDNHWLFLQLCF. C120 (S-palmitoyl cysteine intermediate) is an active-site residue. A helical membrane pass occupies residues 134–154; it reads LFLQLCFYTELLTCYALMFSF. Over 155-185 the chain is Extracellular; the sequence is CHYYYFLPLKKRNLDLFVFRHELAIMRLAAF. A helical transmembrane segment spans residues 186 to 206; sequence MGITMLVGITGLFYTQLIGII. Topologically, residues 207–265 are cytoplasmic; the sequence is TDTTSIEKMSNCCEDISRPRKPWQQTFSEVFGTRWKILWFIPFRQRQPLRVPYHFANHV.

Belongs to the DHHC palmitoyltransferase family. Widely expressed.

The protein resides in the golgi apparatus membrane. Its subcellular location is the golgi apparatus. It is found in the cis-Golgi network membrane. The protein localises to the cell membrane. It catalyses the reaction L-cysteinyl-[protein] + hexadecanoyl-CoA = S-hexadecanoyl-L-cysteinyl-[protein] + CoA. Its function is as follows. Palmitoyltransferase that catalyzes the addition of palmitate onto various protein substrates. Palmitoylates sex steroid hormone receptors, including ESR1, PGR and AR, thereby regulating their targeting to the plasma membrane. This affects rapid intracellular signaling by sex hormones via ERK and AKT kinases and the generation of cAMP, but does not affect that mediated by their nuclear receptor. Palmitoylates FYN, regulates its localization in hair follicles and plays a key role in epidermal homeostasis and hair follicle differentiation. Through the palmitoylation of PLCB1 and the regulation of PLCB1 downstream signaling may indirectly regulate the function of the endothelial barrier and the adhesion of leukocytes to the endothelium. Also has a palmitoyltransferase activity toward ADRA1D, positively regulating its activity and expression and may thereby play a role in vascular contraction. May also palmitoylate eNOS and LCK. In Homo sapiens (Human), this protein is Palmitoyltransferase ZDHHC21.